The sequence spans 228 residues: Ribose-5-phosphate isomerase A (228 aa).

Substrate contacts are provided by residues 32–35 (TGST), 85–88 (DGAD), and 98–101 (KGGG). The active-site Proton acceptor is the Glu-107. Residue Lys-125 participates in substrate binding.

This sequence belongs to the ribose 5-phosphate isomerase family. Homodimer.

The enzyme catalyses aldehydo-D-ribose 5-phosphate = D-ribulose 5-phosphate. It participates in carbohydrate degradation; pentose phosphate pathway; D-ribose 5-phosphate from D-ribulose 5-phosphate (non-oxidative stage): step 1/1. Its function is as follows. Catalyzes the reversible conversion of ribose-5-phosphate to ribulose 5-phosphate. The polypeptide is Ribose-5-phosphate isomerase A (Cupriavidus necator (strain ATCC 17699 / DSM 428 / KCTC 22496 / NCIMB 10442 / H16 / Stanier 337) (Ralstonia eutropha)).